We begin with the raw amino-acid sequence, 668 residues long: Spartin (668 aa).

An N-acetylmethionine modification is found at methionine 1. Residues isoleucine 16–isoleucine 94 form the MIT domain. Residues valine 110–proline 176 form a disordered region. The span at proline 118–proline 127 shows a compositional bias: basic and acidic residues. Position 126 is a phosphoserine (serine 126). Low complexity predominate over residues glutamate 128–proline 162. Residues glutamate 190 to arginine 380 form a ubiquitin-binding region (UBR) domain region. Positions glutamate 193–asparagine 200 match the LC3-interacting region (LIR); mediates interaction with MAP1LC3A AND MAP1LC3C motif. Residues phenylalanine 348–glutamate 396 form a disordered region. Residue lysine 362 forms a Glycyl lysine isopeptide (Lys-Gly) (interchain with G-Cter in ubiquitin) linkage. The 185-residue stretch at isoleucine 427–alanine 611 folds into the Senescence domain. Positions alanine 431 to asparagine 503 are required for localization to lipid droplets. Serine 470 bears the Phosphoserine mark. The disordered stretch occupies residues isoleucine 631–lysine 668. The span at lysine 648 to lysine 668 shows a compositional bias: basic and acidic residues.

Interacts with ITCH and WWP1. Interacts (via MIT domain) with IST1; leading to the recruitment of SPART to midbodies. Interacts with MAP1LC3A and MAP1LC3C. Ubiquitinated; ubiquitination does not require ITCH and WWP1.

It localises to the cytoplasm. The protein localises to the midbody. The protein resides in the lipid droplet. In terms of biological role, lipophagy receptor that plays an important role in lipid droplet (LD) turnover in motor neurons. Localizes to LDs and interacts with components of the autophagy machinery, such as MAP1LC3A/C proteins to deliver LDs to autophagosomes for degradation via lipophagy. Lipid transfer protein required for lipid droplet degradation, including by lipophagy. Can bind and transfer all lipid species found in lipid droplets, from phospholipids to triglycerides and sterol esters but the direction of lipid transfer by spartin and its cargos are unknown. May be implicated in endosomal trafficking, or microtubule dynamics, or both. Participates in cytokinesis. The chain is Spartin from Bos taurus (Bovine).